The sequence spans 612 residues: Protein MUK1 (612 aa).

A compositionally biased stretch (basic and acidic residues) spans E40–C50. Residues E40–K66 are disordered. Residues N55 to K66 show a composition bias toward polar residues. A phosphoserine mark is found at S67, S163, S185, and S245. Residues T273 to S414 enclose the VPS9 domain. The segment at I494–R560 is disordered. The segment covering N503–N517 has biased composition (low complexity). Residues I518–L529 are compositionally biased toward polar residues. The span at S530–S542 shows a compositional bias: basic and acidic residues. Residues R543–S554 show a composition bias toward low complexity.

The protein localises to the cytoplasm. Its function is as follows. Putative GTPase-activating protein. The polypeptide is Protein MUK1 (MUK1) (Saccharomyces cerevisiae (strain ATCC 204508 / S288c) (Baker's yeast)).